The sequence spans 325 residues: Terpene synthase 11 (325 aa).

A DDxx(x)D/E motif motif is present at residues 97 to 102 (DDEYLE). The short motif at 227–235 (NDIYSFVKE) is the NDxxSxxxD/E motif element.

Belongs to the terpene synthase family.

The catalysed reaction is (2E,6E)-farnesyl diphosphate = (E)-beta-farnesene + diphosphate. It carries out the reaction (2E,6E)-farnesyl diphosphate = (3E,6E)-alpha-farnesene + diphosphate. It catalyses the reaction geranylgeranyl diphosphate + H2O = (S)-(+)-nephthenol + diphosphate. In terms of biological role, terpene synthase that converts its substrate farnesyl diphosphate (FPP) into the sesquiterpenes (E)-beta-farnesene and (E,E)-alpha-farnesene. TPS11 also converts geranylgeranyl diphosphate (GGPP) into the diterpene (S)-nephthenol. The protein is Terpene synthase 11 of Dictyostelium purpureum (Slime mold).